Consider the following 452-residue polypeptide: COP9 signalosome complex subunit 11 (452 aa).

The 170-residue stretch at 205–374 folds into the PCI domain; the sequence is FYIEDPKTMM…ISYSKRSIVD (170 aa).

Component of a COP9 signalosome-like (CSN) complex.

Its subcellular location is the cytoplasm. The protein resides in the nucleus. Its function is as follows. Component of the COP9 signalosome (CSN) complex that acts as an regulator of the ubiquitin (Ubl) conjugation pathway by mediating the deneddylation of the cullin subunit of SCF-type E3 ubiquitin-protein ligase complexes The CSN complex is involved in the regulation of the mating pheromone response. PCI8 may also be involved in transcriptional and translational control. The sequence is that of COP9 signalosome complex subunit 11 (PCI8) from Candida glabrata (strain ATCC 2001 / BCRC 20586 / JCM 3761 / NBRC 0622 / NRRL Y-65 / CBS 138) (Yeast).